A 199-amino-acid chain; its full sequence is Adult-specific cuticular protein ACP-22 (199 aa).

A signal peptide spans 1–19 (MRLFIILSVASFGAIGVLS). Residues 63-103 (GGGGGGGGEGEEGREHELRGGGLELGGGGGGGGGGGGGGGE) form a disordered region. Residues 82-102 (GGGLELGGGGGGGGGGGGGGG) show a composition bias toward gly residues. A Chitin-binding type R&amp;R domain is found at 133 to 199 (HPEYHSDYHV…IARVSYRKHH (67 aa)).

Epidermal regions synthesizing hard cuticle.

In terms of biological role, cuticular proteins play a significant role in determining the physical properties of cuticles. This is Adult-specific cuticular protein ACP-22 (ACP22) from Tenebrio molitor (Yellow mealworm beetle).